The chain runs to 734 residues: Myb-like protein J (734 aa).

Disordered stretches follow at residues 1-35 (MPNN…FKSN), 128-196 (QKDQ…PTMM), and 221-378 (SPIS…LKQG). A compositionally biased stretch (basic and acidic residues) spans 131–142 (QQQKEQQKEQQK). The segment covering 164–173 (TTTTTTTTTT) has biased composition (low complexity). Over residues 174–196 (AVEQQGAEQQDTNLNSTSSPTMM) the composition is skewed to polar residues. Positions 221-230 (SPISSSLNNS) are enriched in low complexity. Polar residues predominate over residues 231–257 (QDNTKPVSPDNIENTSNPMDTSSSNGK). Positions 258-372 (TPTITPIVTP…GGKTNPTGKK (115 aa)) are enriched in low complexity. The HTH myb-type domain occupies 371-426 (KKTSLKQGWTKEEHIRFLNGIQIHGKGAWKEIAQFVGTRTPTQIQSHAQKYYLRQK). A DNA-binding region (H-T-H motif) is located at residues 399 to 422 (WKEIAQFVGTRTPTQIQSHAQKYY). Low complexity predominate over residues 445-454 (DDNLNNSNKN). Positions 445-623 (DDNLNNSNKN…GNILRHQNSH (179 aa)) are disordered. The segment covering 455-468 (NVDKNKQDDKEKKT) has biased composition (basic and acidic residues). Positions 469-478 (QKTKKTKSKS) are enriched in basic residues. Composition is skewed to low complexity over residues 489-543 (QQQQ…SSQT) and 574-615 (NNNN…NEGN).

It is found in the nucleus. This is Myb-like protein J (mybJ) from Dictyostelium discoideum (Social amoeba).